The following is a 376-amino-acid chain: Salivary hyaluronidase (376 aa).

Positions 1–16 (MNWIFHLFCAVYGIFC) are cleaved as a signal peptide. 2 disulfides stabilise this stretch: cysteine 32–cysteine 328 and cysteine 203–cysteine 217. N-linked (GlcNAc...) asparagine glycans are attached at residues asparagine 36, asparagine 55, asparagine 77, and asparagine 88. Residue glutamate 118 is the Proton donor of the active site. N-linked (GlcNAc...) asparagine glycans are attached at residues asparagine 143, asparagine 153, asparagine 181, asparagine 214, asparagine 226, asparagine 248, asparagine 287, asparagine 321, asparagine 336, asparagine 356, and asparagine 371.

This sequence belongs to the glycosyl hydrolase 56 family. Glycosylated; glycosylation is critical for enzymatic activity. In terms of tissue distribution, female salivary gland (at protein level).

The protein localises to the secreted. The catalysed reaction is Random hydrolysis of (1-&gt;4)-linkages between N-acetyl-beta-D-glucosamine and D-glucuronate residues in hyaluronate.. In terms of biological role, hydrolyzes high molecular weight hyaluronic acid to produce small oligosaccharides. Up-regulates expression of CSF2, CSF3, LIF, CXCL1, CXCL2 and CXCL8 in cultured human dermal microvascular endothelial cells. Promotes host neutrophil recruitment at the injection site. (Microbial infection) Probably promotes Leishmania major infection in the host. The protein is Salivary hyaluronidase of Lutzomyia longipalpis (Sand fly).